We begin with the raw amino-acid sequence, 35 residues long: Delta-theraphotoxin-Hm1a (35 aa).

3 cysteine pairs are disulfide-bonded: cysteine 2–cysteine 16, cysteine 9–cysteine 21, and cysteine 15–cysteine 28.

It belongs to the neurotoxin 10 (Hwtx-1) family. 09 (HaTx) subfamily. As to expression, expressed by the venom gland.

The protein resides in the secreted. Its function is as follows. Gating-modifier toxin that potently inhibits inactivation of the mammalian Nav1.1/SCN1A sodium channel (EC(50)=38 nM). Also moderately inhibits inactivation of Nav1.2/SCN2A (EC(50)=236 nM) and Nav1.3/SCN3A (EC(50)=220 nM) when the channels are expressed in oocytes without the beta-1 auxiliary subunit. Does not inhibit inactivation of Nav1.2/SCN2A when the channel is coexpressed with the beta-1 auxiliary subunit. When tested on Nav1.1/SCN1A channel, it enhances peak current amplitude and potently delays channel inactivation in a dose-dependent manner, leading to a large sustained current. It has no effect on the voltage-dependence of steady-state activation, and induces a depolarizing shift in the voltage dependence of inactivation. In addition, it does not modify the recovery from fast inactivation in Nav1.1/SCN1A. The binding affinity and subtype selectivity of the toxin towards Nav1.1/SCN1A channel is determined by residues within both the S1-S2 and S3-S4 loops of the domain IV voltage sensor of the channel. This toxin also weakly inhibits several subtypes of voltage-gated potassium channels. It moderately blocks Kv2.1/KCNB1 (23% inhibition at 100 nM), Kv2.2/KCNB2 (19.7% at 100 nM and 51% at 300 nM), Kv4.1/KCND1 (IC(50)=280 nM), Kv4.2/KCND2 (39% at 300 nM) and Kv4.3/KCND3 (43% at 300 nM). In vivo, intracerebroventricular injection into mice elicits convulsions, spasms, tremors and rapid death. When injected into mouse hindpaw, the toxin elicits an immediate and robust response to pain. However, intraplantar injection of toxin does not cause neurogenic inflammation or alter sensitivity to heat, indicative of a modality-specific effect on mechanosensitive neurons. In Dravet syndrome mice model, intracerebroventricular infusion of this peptide rescues mice from seizures and premature death. This Heteroscodra maculata (Togo starburst tarantula) protein is Delta-theraphotoxin-Hm1a.